The chain runs to 116 residues: Hydrogenase maturation factor HypA (116 aa).

His2 is a Ni(2+) binding site. Zn(2+) contacts are provided by Cys73, Cys76, Cys90, and Cys93.

Belongs to the HypA/HybF family.

Its function is as follows. Involved in the maturation of [NiFe] hydrogenases. Required for nickel insertion into the metal center of the hydrogenase. In Escherichia coli O6:H1 (strain CFT073 / ATCC 700928 / UPEC), this protein is Hydrogenase maturation factor HypA.